We begin with the raw amino-acid sequence, 102 residues long: Small ribosomal subunit protein bS6 (102 aa).

The protein belongs to the bacterial ribosomal protein bS6 family.

Binds together with bS18 to 16S ribosomal RNA. The sequence is that of Small ribosomal subunit protein bS6 from Desulfovibrio desulfuricans (strain ATCC 27774 / DSM 6949 / MB).